The chain runs to 319 residues: Ataxin-3 homolog (319 aa).

Positions 8-179 (ISSIFFERQQ…NSEADDFITL (172 aa)) constitute a Josephin domain. Cys-21 acts as the Nucleophile in catalysis. His-118 functions as the Proton acceptor in the catalytic mechanism. Asn-133 is a catalytic residue. UIM domains are found at residues 218–237 (QEDR…KESS) and 242–261 (SDED…DPNI). A disordered region spans residues 253-319 (MSLSQDPNIP…EKKSQNVPEE (67 aa)). Residues 254–267 (SLSQDPNIPSTSAA) are compositionally biased toward polar residues. Basic and acidic residues predominate over residues 295–313 (QQRRDRAKFLEKLEEEKKS). An interaction with cdc-48.1 and cdc-48.2 region spans residues 297–300 (RRDR).

Forms a complex composed of deubiquitinating enzyme atx-3, adapter ubxn-5 and cdc-48.1. Forms a complex composed of deubiquitinating enzyme atx-3, E4 ubiquitin-protein ligase ufd-2 and cdc-48.1. Interacts (via RRDR motif) with cdc-48.1 (via N-terminus) and cdc-48.2 (via N-terminus); the interaction with cdc-48.1 is not required for atx-3 enzymatic activity. Interacts (via C-terminus) with ubxn-5. May interact with ned-8.

It localises to the cytoplasm. It is found in the nucleus. The protein resides in the nucleolus. It carries out the reaction Thiol-dependent hydrolysis of ester, thioester, amide, peptide and isopeptide bonds formed by the C-terminal Gly of ubiquitin (a 76-residue protein attached to proteins as an intracellular targeting signal).. In terms of biological role, acts as a chain editing deubiquitinating enzyme that binds and cleaves 'Lys-48'-linked polyubiquitin chains, with a preference for chains containing four or more ubiquitin molecules thereby modulating protein degradation by the ubiquitin-proteasome pathway. Probably by regulating the IGF-1-insulin-like pathway, regulates lifespan. Regulates germline DNA double-strand-break repair and apoptosis in response to DNA damage by recruiting E4 ubiquitin-protein ligase ufd-2 to DNA repair foci. Interacts with key regulators of transcription and represses transcription. Acts as a histone-binding protein that regulates transcription. In Caenorhabditis briggsae, this protein is Ataxin-3 homolog.